A 55-amino-acid polypeptide reads, in one-letter code: UPF0391 membrane protein NE1120 (55 aa).

2 helical membrane passes run 4–24 (MALV…AGIA) and 27–47 (LAWA…VFYL).

The protein belongs to the UPF0391 family.

Its subcellular location is the cell membrane. The chain is UPF0391 membrane protein NE1120 from Nitrosomonas europaea (strain ATCC 19718 / CIP 103999 / KCTC 2705 / NBRC 14298).